We begin with the raw amino-acid sequence, 358 residues long: DnaJ homolog subfamily C member 18 (358 aa).

Residues 82–146 enclose the J domain; sequence NYYEILGVSR…DKRLRYDEYG (65 aa). A helical transmembrane segment spans residues 228 to 248; the sequence is AFIQLLPVLVIVIISVITQLL.

Its subcellular location is the endoplasmic reticulum membrane. This is DnaJ homolog subfamily C member 18 (DNAJC18) from Bos taurus (Bovine).